A 259-amino-acid chain; its full sequence is UPF0246 protein VF_2109 (259 aa).

Belongs to the UPF0246 family.

In Aliivibrio fischeri (strain ATCC 700601 / ES114) (Vibrio fischeri), this protein is UPF0246 protein VF_2109.